Reading from the N-terminus, the 625-residue chain is Endo-1,4-beta-xylanase A (625 aa).

The first 19 residues, 1–19, serve as a signal peptide directing secretion; it reads MKLFQIFPLLLSLTSVTLA. The region spanning 35-231 is the GH11 1 domain; it reads VSTGHDVKKI…TGGGCSGSVE (197 aa). The interval 245–283 is disordered; the sequence is DGKSKGGSSSGGSNGQGLGNGQGNGQGQGNGQGQSATGS. The span at 252-276 shows a compositional bias: gly residues; it reads SSSGGSNGQGLGNGQGNGQGQGNGQ. Positions 255–279 are linker; it reads GGSNGQGLGNGQGNGQGQGNGQGQS. Repeat copies occupy residues 259-268 and 269-278. A 2 X 10 AA tandem repeats of G-Q-G-[LQ]-G-N-G-Q-G-[NQ] region spans residues 259–278; sequence GQGLGNGQGNGQGQGNGQGQ. 2 consecutive CBM10 domains span residues 285–324 and 332–371; these read KCPS…CGCG and NCPS…CGCG. Residues 374–403 are linker; the sequence is NTTPTTTTKKSNNSQPTQGQSNNNSSTNTN. Residues 379–399 form a disordered region; that stretch reads TTTKKSNNSQPTQGQSNNNSS. Residues 416-617 enclose the GH11 2 domain; the sequence is TETSNKVGSI…GSGTSGTADF (202 aa). Glutamate 510 (nucleophile) is an active-site residue. Glutamate 603 functions as the Proton donor in the catalytic mechanism.

It belongs to the glycosyl hydrolase 11 (cellulase G) family.

It carries out the reaction Endohydrolysis of (1-&gt;4)-beta-D-xylosidic linkages in xylans.. The protein operates within glycan degradation; xylan degradation. Its function is as follows. Hydrolyzes 1,4-beta linked polysaccharide backbones of xylans, one of the major hemicellulose components in hardwoods and softwoods. It is more active against xylopentaose than xylotetraose, has trace activity against xylotriose. The major products released from hydrolysis of xylooligosaccharides are xylobiose and xylotriose. The reiterated 40 AA domain is involved in binding the cellulase-hemicellulase complex. The sequence is that of Endo-1,4-beta-xylanase A (XYNA) from Piromyces sp.